The primary structure comprises 456 residues: tRNA-2-methylthio-N(6)-dimethylallyladenosine synthase (456 aa).

Residues 6–125 (KRLFIKTYGC…LPELIAQAHR (120 aa)) form the MTTase N-terminal domain. 6 residues coordinate [4Fe-4S] cluster: cysteine 15, cysteine 51, cysteine 88, cysteine 163, cysteine 167, and cysteine 170. One can recognise a Radical SAM core domain in the interval 149-385 (QVEGYSAFVT…QELLSDQQAA (237 aa)). One can recognise a TRAM domain in the interval 388 to 450 (ESMIGRTLPV…RNSLSGSLTG (63 aa)).

The protein belongs to the methylthiotransferase family. MiaB subfamily. Monomer. [4Fe-4S] cluster serves as cofactor.

The protein resides in the cytoplasm. It carries out the reaction N(6)-dimethylallyladenosine(37) in tRNA + (sulfur carrier)-SH + AH2 + 2 S-adenosyl-L-methionine = 2-methylsulfanyl-N(6)-dimethylallyladenosine(37) in tRNA + (sulfur carrier)-H + 5'-deoxyadenosine + L-methionine + A + S-adenosyl-L-homocysteine + 2 H(+). Functionally, catalyzes the methylthiolation of N6-(dimethylallyl)adenosine (i(6)A), leading to the formation of 2-methylthio-N6-(dimethylallyl)adenosine (ms(2)i(6)A) at position 37 in tRNAs that read codons beginning with uridine. The protein is tRNA-2-methylthio-N(6)-dimethylallyladenosine synthase of Maricaulis maris (strain MCS10) (Caulobacter maris).